A 137-amino-acid polypeptide reads, in one-letter code: Phosphoribosyl-ATP pyrophosphatase (137 aa).

The span at 114 to 124 (EGTSGIEEKAL) shows a compositional bias: basic and acidic residues. Residues 114 to 137 (EGTSGIEEKALRKSLQRAAEEAQP) are disordered.

Belongs to the PRA-PH family.

The protein localises to the cytoplasm. The enzyme catalyses 1-(5-phospho-beta-D-ribosyl)-ATP + H2O = 1-(5-phospho-beta-D-ribosyl)-5'-AMP + diphosphate + H(+). It functions in the pathway amino-acid biosynthesis; L-histidine biosynthesis; L-histidine from 5-phospho-alpha-D-ribose 1-diphosphate: step 2/9. In Paracidovorax citrulli (strain AAC00-1) (Acidovorax citrulli), this protein is Phosphoribosyl-ATP pyrophosphatase.